We begin with the raw amino-acid sequence, 454 residues long: tRNA modification GTPase MnmE (454 aa).

The (6S)-5-formyl-5,6,7,8-tetrahydrofolate site is built by R23, E80, and K120. Residues G216–G377 form the TrmE-type G domain. N226 lines the K(+) pocket. GTP-binding positions include N226 to S231, T245 to T251, D270 to G273, and N335 to D338. S230 contacts Mg(2+). Residues T245, I247, and T250 each coordinate K(+). T251 contributes to the Mg(2+) binding site. Position 454 (K454) interacts with (6S)-5-formyl-5,6,7,8-tetrahydrofolate.

Belongs to the TRAFAC class TrmE-Era-EngA-EngB-Septin-like GTPase superfamily. TrmE GTPase family. Homodimer. Heterotetramer of two MnmE and two MnmG subunits. K(+) is required as a cofactor.

Its subcellular location is the cytoplasm. Its function is as follows. Exhibits a very high intrinsic GTPase hydrolysis rate. Involved in the addition of a carboxymethylaminomethyl (cmnm) group at the wobble position (U34) of certain tRNAs, forming tRNA-cmnm(5)s(2)U34. The sequence is that of tRNA modification GTPase MnmE from Pseudoalteromonas translucida (strain TAC 125).